The following is a 67-amino-acid chain: Large ribosomal subunit protein uL29 (67 aa).

Belongs to the universal ribosomal protein uL29 family.

The polypeptide is Large ribosomal subunit protein uL29 (Clostridium acetobutylicum (strain ATCC 824 / DSM 792 / JCM 1419 / IAM 19013 / LMG 5710 / NBRC 13948 / NRRL B-527 / VKM B-1787 / 2291 / W)).